We begin with the raw amino-acid sequence, 219 residues long: uncharacterized protein (219 aa).

The region spanning 30-107 (FRLFVGNLGN…RPVKLSRATS (78 aa)) is the RRM domain. The span at 140-149 (KKIKNKHGKN) shows a compositional bias: basic residues. The segment at 140 to 219 (KKIKNKHGKN…YSRASSFRRV (80 aa)) is disordered. Positions 150-169 (SSKSSRAAQSAAAELISSSS) are enriched in low complexity. Residues 176-186 (ANSTSVPNAVN) are compositionally biased toward polar residues.

This is an uncharacterized protein from Schizosaccharomyces pombe (strain 972 / ATCC 24843) (Fission yeast).